The primary structure comprises 858 residues: RNA-directed RNA polymerase 2a (858 aa).

A RdRp catalytic domain is found at 511 to 624; sequence KHCFEIDLSK…FSVLPPVGDP (114 aa). A compositionally biased stretch (basic and acidic residues) spans 772–785; it reads TKQREKKDGIERRR. The disordered stretch occupies residues 772–830; that stretch reads TKQREKKDGIERRRNDKRRTPTGSYGGGEEAETKVSQAESTGTRSQKSQREGAFKSQAV. The segment covering 805–817 has biased composition (polar residues); that stretch reads KVSQAESTGTRSQ.

The protein belongs to the ssRNA positive-strand viruses RNA-directed RNA polymerase family. As to quaternary structure, interacts with replication protein 1a.

The enzyme catalyses RNA(n) + a ribonucleoside 5'-triphosphate = RNA(n+1) + diphosphate. In terms of biological role, RNA-dependent RNA polymerase which replicates the viral genome composed of 3 RNA segments, RNA1, RNA2 and RNA3. This Cucumber mosaic virus (strain As) (CMV) protein is RNA-directed RNA polymerase 2a.